A 126-amino-acid polypeptide reads, in one-letter code: Aspartate 1-decarboxylase (126 aa).

Ser-25 functions as the Schiff-base intermediate with substrate; via pyruvic acid in the catalytic mechanism. Ser-25 bears the Pyruvic acid (Ser) mark. Residue Thr-57 coordinates substrate. Tyr-58 (proton donor) is an active-site residue. 73 to 75 (GAA) serves as a coordination point for substrate.

The protein belongs to the PanD family. As to quaternary structure, heterooctamer of four alpha and four beta subunits. The cofactor is pyruvate. Is synthesized initially as an inactive proenzyme, which is activated by self-cleavage at a specific serine bond to produce a beta-subunit with a hydroxyl group at its C-terminus and an alpha-subunit with a pyruvoyl group at its N-terminus.

Its subcellular location is the cytoplasm. The enzyme catalyses L-aspartate + H(+) = beta-alanine + CO2. It participates in cofactor biosynthesis; (R)-pantothenate biosynthesis; beta-alanine from L-aspartate: step 1/1. In terms of biological role, catalyzes the pyruvoyl-dependent decarboxylation of aspartate to produce beta-alanine. This chain is Aspartate 1-decarboxylase, found in Thioalkalivibrio sulfidiphilus (strain HL-EbGR7).